The chain runs to 294 residues: P32 adhesin (294 aa).

The next 2 membrane-spanning stretches (helical) occupy residues 11–31 and 66–86; these read LVGVSFVFSGVIALGTGVGLT and VVGAGAGLIVVSLLLGLGIGI. 2 consecutive repeat copies span residues 172-193 and 194-214. The tract at residues 172 to 214 is 2 X 22 AA repeats; the sequence is GGPMQPNQMGMRPGFNQMPPQMGGMPPNQMGMRPGFNQMPPQM. Residues 234-294 form a disordered region; the sequence is RPGFRPQPGG…AGFPPQNGPR (61 aa). The span at 241-256 shows a compositional bias: gly residues; sequence PGGGVPMGNKAGGGFN.

The protein localises to the cell projection. Its subcellular location is the attachment organelle membrane. Its function is as follows. Adhesin necessary for successful cytadherence and virulence. This chain is P32 adhesin (mgc2), found in Mycoplasmoides gallisepticum (strain R(low / passage 15 / clone 2)) (Mycoplasma gallisepticum).